The primary structure comprises 251 residues: tRNA (guanine-N(1)-)-methyltransferase (251 aa).

S-adenosyl-L-methionine-binding positions include Gly113 and 133-138 (IGDYVL).

The protein belongs to the RNA methyltransferase TrmD family. In terms of assembly, homodimer.

It is found in the cytoplasm. The enzyme catalyses guanosine(37) in tRNA + S-adenosyl-L-methionine = N(1)-methylguanosine(37) in tRNA + S-adenosyl-L-homocysteine + H(+). Its function is as follows. Specifically methylates guanosine-37 in various tRNAs. This Pectobacterium atrosepticum (strain SCRI 1043 / ATCC BAA-672) (Erwinia carotovora subsp. atroseptica) protein is tRNA (guanine-N(1)-)-methyltransferase.